The chain runs to 87 residues: Beta-toxin Ct1a (87 aa).

The first 19 residues, 1-19 (MNSLLMITACLALIGTVWA), serve as a signal peptide directing secretion. One can recognise an LCN-type CS-alpha/beta domain in the interval 20–85 (KEGYLVNHST…VWPLPKKTCN (66 aa)). 4 disulfide bridges follow: cysteine 31/cysteine 84, cysteine 35/cysteine 60, cysteine 44/cysteine 65, and cysteine 48/cysteine 67. Asparagine 85 is subject to Asparagine amide.

The protein belongs to the long (4 C-C) scorpion toxin superfamily. Sodium channel inhibitor family. Beta subfamily. Expressed by the venom gland.

It is found in the secreted. Beta toxins bind voltage-independently at site-4 of sodium channels (Nav) and shift the voltage of activation toward more negative potentials thereby affecting sodium channel activation and promoting spontaneous and repetitive firing. Is lethal to mice but does not show toxicity to freshwater shrimp and crickets. The sequence is that of Beta-toxin Ct1a from Centruroides tecomanus (Scorpion).